A 400-amino-acid polypeptide reads, in one-letter code: Putative lysosomal acid lipase/cholesteryl ester hydrolase (400 aa).

The signal sequence occupies residues M1–S17. N-linked (GlcNAc...) asparagine glycans are attached at residues N34, N129, and N159. One can recognise an AB hydrolase-1 domain in the interval P78–G378. S172 functions as the Charge relay system in the catalytic mechanism. A glycan (N-linked (GlcNAc...) asparagine) is linked at N271. The active-site Charge relay system is the H372.

Belongs to the AB hydrolase superfamily. Lipase family. Expressed by the venom gland.

It localises to the secreted. It carries out the reaction a sterol ester + H2O = a sterol + a fatty acid + H(+). In physiological conditions, is crucial for intracellular hydrolysis of cholesteryl esters and triglycerides that have been internalized via receptor-mediated endocytosis of lipoprotein particles. In venom, the biological contribution is unknown. The chain is Putative lysosomal acid lipase/cholesteryl ester hydrolase from Crotalus adamanteus (Eastern diamondback rattlesnake).